The following is a 187-amino-acid chain: Glutathione-dependent formaldehyde-activating enzyme (187 aa).

Residues 20 to 167 enclose the CENP-V/GFA domain; the sequence is FAGGTLVCKC…LKELGLEPYD (148 aa). Zn(2+)-binding residues include cysteine 27, cysteine 29, cysteine 48, cysteine 50, cysteine 53, cysteine 95, and cysteine 98.

This sequence belongs to the Gfa family. Requires Zn(2+) as cofactor.

The catalysed reaction is S-(hydroxymethyl)glutathione = glutathione + formaldehyde. It functions in the pathway one-carbon metabolism; formaldehyde degradation; formate from formaldehyde (glutathione route): step 1/3. Functionally, catalyzes the condensation of formaldehyde and glutathione to S-hydroxymethylglutathione. The protein is Glutathione-dependent formaldehyde-activating enzyme of Bradyrhizobium sp. (strain BTAi1 / ATCC BAA-1182).